The sequence spans 106 residues: Small ribosomal subunit protein bS18 (106 aa).

Residues 1 to 22 (MSEETTVRPERTERSERPERPQ) are compositionally biased toward basic and acidic residues. Residues 1–34 (MSEETTVRPERTERSERPERPQYRGNGPRKRRPF) are disordered.

The protein belongs to the bacterial ribosomal protein bS18 family. As to quaternary structure, part of the 30S ribosomal subunit. Forms a tight heterodimer with protein bS6.

In terms of biological role, binds as a heterodimer with protein bS6 to the central domain of the 16S rRNA, where it helps stabilize the platform of the 30S subunit. The chain is Small ribosomal subunit protein bS18 from Geobacter metallireducens (strain ATCC 53774 / DSM 7210 / GS-15).